We begin with the raw amino-acid sequence, 73 residues long: MATQSKYQSKQFDALSGDLIAILEKHKAPVDLSLMALGNMVTNILLENVQTGAQRLALAEAFSNALKNSLKIK.

The protein belongs to the UPF0352 family.

This chain is UPF0352 protein APL_0584, found in Actinobacillus pleuropneumoniae serotype 5b (strain L20).